The primary structure comprises 610 residues: Granule-bound starch synthase 1, chloroplastic/amyloplastic (610 aa).

A chloroplast-targeting transit peptide spans 1-79; sequence MATVTASSNF…SKVKTAGKIV (79 aa). Lysine 98 provides a ligand contact to ADP-alpha-D-glucose. Residues 438 to 454 adopt a coiled-coil conformation; it reads TGKKKMEAQILELEEKF.

Belongs to the glycosyltransferase 1 family. Bacterial/plant glycogen synthase subfamily. In terms of assembly, interacts with PTST. This interaction is critical for the localization to starch granules. As to expression, expressed in roots, inflorescences, flowers, fruits and at much higher levels in leaves.

It localises to the plastid. The protein resides in the chloroplast. The enzyme catalyses an NDP-alpha-D-glucose + [(1-&gt;4)-alpha-D-glucosyl](n) = [(1-&gt;4)-alpha-D-glucosyl](n+1) + a ribonucleoside 5'-diphosphate + H(+). The protein operates within glycan biosynthesis; starch biosynthesis. Its function is as follows. Required for the synthesis of amylose. Destroyed as it is released from the starch granules during the night. The circadian expression is controlled by CCA1 and LHY transcription factors. The chain is Granule-bound starch synthase 1, chloroplastic/amyloplastic from Arabidopsis thaliana (Mouse-ear cress).